The chain runs to 216 residues: ADP-ribosylation factor D (216 aa).

Low complexity predominate over residues 188–204; the sequence is SKFSFSNKSKQQKSNSQ. The interval 188-216 is disordered; sequence SKFSFSNKSKQQKSNSQPNTPRKNIQMMT. Residues 205-216 are compositionally biased toward polar residues; it reads PNTPRKNIQMMT.

Belongs to the small GTPase superfamily. Arf family.

The protein resides in the golgi apparatus. In terms of biological role, GTP-binding protein involved in protein trafficking; may modulate vesicle budding and uncoating within the Golgi apparatus. The chain is ADP-ribosylation factor D (arrD) from Dictyostelium discoideum (Social amoeba).